We begin with the raw amino-acid sequence, 124 residues long: V-type proton ATPase subunit F (124 aa).

The protein belongs to the V-ATPase F subunit family. As to quaternary structure, V-ATPase is a heteromultimeric enzyme composed of a peripheral catalytic V1 complex (components A to H) attached to an integral membrane V0 proton pore complex (components: a, c, c', c'', d, e, f and VOA1).

It is found in the vacuole membrane. In terms of biological role, subunit of the V1 complex of vacuolar(H+)-ATPase (V-ATPase), a multisubunit enzyme composed of a peripheral complex (V1) that hydrolyzes ATP and a membrane integral complex (V0) that translocates protons. V-ATPase is responsible for acidifying and maintaining the pH of intracellular compartments. This Neosartorya fischeri (strain ATCC 1020 / DSM 3700 / CBS 544.65 / FGSC A1164 / JCM 1740 / NRRL 181 / WB 181) (Aspergillus fischerianus) protein is V-type proton ATPase subunit F (vma7).